The chain runs to 264 residues: Cyclin-P1-1 (264 aa).

Residues 1-25 (MDAAAAAGGEMSRQKATASAPPPPE) are disordered.

Belongs to the cyclin family. Cyclin U/P subfamily.

In Oryza sativa subsp. japonica (Rice), this protein is Cyclin-P1-1 (CYCP1-1).